Reading from the N-terminus, the 1264-residue chain is P-type sodium-transporting ATPase4 (1264 aa).

A compositionally biased stretch (polar residues) spans 1-12; the sequence is MSSQNNNKQGGQ. Residues 1-102 form a disordered region; that stretch reads MSSQNNNKQG…INGEKNDDNN (102 aa). Basic and acidic residues-rich tracts occupy residues 15–42 and 50–64; these read NNKK…DELN and NDMK…KKNE. 8 helical membrane-spanning segments follow: residues 165 to 185, 186 to 206, 359 to 379, 393 to 413, 923 to 943, 1006 to 1026, 1203 to 1223, and 1226 to 1246; these read VWLI…LVAA, VASL…IVTL, GLIG…AVII, FVII…GLPM, FVCF…VAIV, IFEA…CTGF, CSIS…TSIL, and TCLL…NLFL.

It belongs to the cation transport ATPase (P-type) (TC 3.A.3) family.

It localises to the cell membrane. It carries out the reaction Na(+)(in) + ATP + H2O = Na(+)(out) + ADP + phosphate + H(+). Its activity is regulated as follows. Inhibited by cipargamin and other spiroindolone compounds. Inhibited by 4-cyano-3-methylisoquinoline derivatives MB14 and MB10 but not RK18. Inhibited by (+)-SJ733, a dihydroisoquinolone compound. In terms of biological role, sodium-exporting ATPase. Required for the extrusion of Na(+) from the intraerythrocytic parasites to maintain a low cytosolic concentration of Na(+). The polypeptide is P-type sodium-transporting ATPase4 (Plasmodium falciparum (isolate 3D7)).